Here is a 124-residue protein sequence, read N- to C-terminus: BLOC-1-related complex subunit 8 (124 aa).

The disordered stretch occupies residues 102 to 124 (SSSQGRSAVINPNETPAHTSVTP).

This sequence belongs to the BORCS8 family.

The protein resides in the lysosome membrane. In terms of biological role, as part of a BORC-like complex, it may play a role in the movement and localization of lysosomes at the cell periphery. Associated with the cytosolic face of lysosomes, this complex may couple lysosomes to microtubule plus-end-directed kinesin motors, driving lysosome movement toward the cell periphery. The sequence is that of BLOC-1-related complex subunit 8 from Danio rerio (Zebrafish).